A 252-amino-acid polypeptide reads, in one-letter code: Chitooligosaccharide deacetylase (252 aa).

Mg(2+) contacts are provided by His61 and His125.

This sequence belongs to the YdjC deacetylase family. ChbG subfamily. In terms of assembly, homodimer. Mg(2+) is required as a cofactor.

It localises to the cytoplasm. It catalyses the reaction N,N'-diacetylchitobiose + H2O = N-acetyl-beta-D-glucosaminyl-(1-&gt;4)-D-glucosamine + acetate. It carries out the reaction diacetylchitobiose-6'-phosphate + H2O = N'-monoacetylchitobiose-6'-phosphate + acetate. The protein operates within glycan degradation; chitin degradation. Functionally, involved in the degradation of chitin. ChbG is essential for growth on the acetylated chitooligosaccharides chitobiose and chitotriose but is dispensable for growth on cellobiose and chitosan dimer, the deacetylated form of chitobiose. Deacetylation of chitobiose-6-P and chitotriose-6-P is necessary for both the activation of the chb promoter by the regulatory protein ChbR and the hydrolysis of phosphorylated beta-glucosides by the phospho-beta-glucosidase ChbF. Catalyzes the removal of only one acetyl group from chitobiose-6-P to yield monoacetylchitobiose-6-P, the inducer of ChbR and the substrate of ChbF. The polypeptide is Chitooligosaccharide deacetylase (Salmonella typhimurium (strain LT2 / SGSC1412 / ATCC 700720)).